A 322-amino-acid chain; its full sequence is Undecaprenyl-phosphate 4-deoxy-4-formamido-L-arabinose transferase (322 aa).

The Cytoplasmic portion of the chain corresponds to 1–235 (MFEIHPVKKV…TCLTTTPLRM (235 aa)). Residues 236–256 (LSLLGSIIAIGGFSIAVLLVI) form a helical membrane-spanning segment. The Periplasmic portion of the chain corresponds to 257–269 (LRLTFGPQWAAEG). A helical membrane pass occupies residues 270–290 (VFMLFAVLFTFIGAQFIGMGL). Topologically, residues 291–322 (LGEYIGRIYTDVRARPRYFVQQVIRPSSKENE) are cytoplasmic.

It belongs to the glycosyltransferase 2 family.

The protein localises to the cell inner membrane. The enzyme catalyses UDP-4-deoxy-4-formamido-beta-L-arabinose + di-trans,octa-cis-undecaprenyl phosphate = 4-deoxy-4-formamido-alpha-L-arabinopyranosyl di-trans,octa-cis-undecaprenyl phosphate + UDP. Its pathway is glycolipid biosynthesis; 4-amino-4-deoxy-alpha-L-arabinose undecaprenyl phosphate biosynthesis; 4-amino-4-deoxy-alpha-L-arabinose undecaprenyl phosphate from UDP-4-deoxy-4-formamido-beta-L-arabinose and undecaprenyl phosphate: step 1/2. The protein operates within bacterial outer membrane biogenesis; lipopolysaccharide biosynthesis. Functionally, catalyzes the transfer of 4-deoxy-4-formamido-L-arabinose from UDP to undecaprenyl phosphate. The modified arabinose is attached to lipid A and is required for resistance to polymyxin and cationic antimicrobial peptides. The polypeptide is Undecaprenyl-phosphate 4-deoxy-4-formamido-L-arabinose transferase (Escherichia coli O17:K52:H18 (strain UMN026 / ExPEC)).